The chain runs to 65 residues: Large ribosomal subunit protein bL35 (65 aa).

It belongs to the bacterial ribosomal protein bL35 family.

In Psychrobacter sp. (strain PRwf-1), this protein is Large ribosomal subunit protein bL35.